A 222-amino-acid polypeptide reads, in one-letter code: Ribosomal RNA small subunit methyltransferase G (222 aa).

Residues Gly-85, Leu-90, Asp-108–Thr-110, Val-136–Glu-137, and Arg-150 each bind S-adenosyl-L-methionine.

It belongs to the methyltransferase superfamily. RNA methyltransferase RsmG family.

The protein resides in the cytoplasm. Functionally, specifically methylates the N7 position of a guanine in 16S rRNA. The protein is Ribosomal RNA small subunit methyltransferase G of Chlorobium phaeobacteroides (strain DSM 266 / SMG 266 / 2430).